Here is a 226-residue protein sequence, read N- to C-terminus: 6-deoxy-6-sulfo-D-fructose transaldolase (226 aa).

K89 acts as the Schiff-base intermediate with substrate in catalysis.

Belongs to the transaldolase family.

It catalyses the reaction 6-deoxy-6-sulfo-D-fructose + D-glyceraldehyde 3-phosphate = D-fructose 6-phosphate + (2S)-3-sulfolactaldehyde. The catalysed reaction is 6-deoxy-6-sulfo-D-fructose + D-erythrose 4-phosphate = (2S)-3-sulfolactaldehyde + D-sedoheptulose 7-phosphate. Part of the sulfo-TAL (or sulfo-SFT) pathway, a D-sulfoquinovose degradation pathway that produces sulfolactate (SL). Catalyzes the conversion of 6-deoxy-6-sulfo-D-fructose (SF) and glyceraldehyde 3-phosphate (GAP) into fructose-6-phosphate (F6P) and 3-sulfolactaldehyde (SLA). Can also catalyze the SF-cleavage with erythrose 4-phosphate (E4P) as acceptor, forming 3-sulfolactaldehyde (SLA) and sedoheptulose 7-phosphate (S7P). This chain is 6-deoxy-6-sulfo-D-fructose transaldolase, found in Priestia aryabhattai (Bacillus aryabhattai).